Reading from the N-terminus, the 160-residue chain is Nucleotide-binding protein Patl_4311 (160 aa).

This sequence belongs to the YajQ family.

Nucleotide-binding protein. The polypeptide is Nucleotide-binding protein Patl_4311 (Pseudoalteromonas atlantica (strain T6c / ATCC BAA-1087)).